The sequence spans 428 residues: Histidinol dehydrogenase (428 aa).

Substrate-binding residues include Ser232, Gln254, and His257. 2 residues coordinate Zn(2+): Gln254 and His257. Active-site proton acceptor residues include Glu324 and His325. Residues His325, Asp358, Glu412, and His417 each coordinate substrate. Asp358 is a binding site for Zn(2+). His417 is a Zn(2+) binding site.

This sequence belongs to the histidinol dehydrogenase family. Zn(2+) serves as cofactor.

It carries out the reaction L-histidinol + 2 NAD(+) + H2O = L-histidine + 2 NADH + 3 H(+). It functions in the pathway amino-acid biosynthesis; L-histidine biosynthesis; L-histidine from 5-phospho-alpha-D-ribose 1-diphosphate: step 9/9. Catalyzes the sequential NAD-dependent oxidations of L-histidinol to L-histidinaldehyde and then to L-histidine. This Thermotoga maritima (strain ATCC 43589 / DSM 3109 / JCM 10099 / NBRC 100826 / MSB8) protein is Histidinol dehydrogenase.